The sequence spans 177 residues: Glia associated membrane protein glam-1 (177 aa).

Helical transmembrane passes span 19 to 39 (PLVVGLAVFGAIRSFVQFWMS), 42 to 62 (FGMAGTHFCVLLLDLLLLFGA), and 76 to 96 (VTFACVLIAIIRFMIYPVVFA).

The protein resides in the membrane. The protein is Glia associated membrane protein glam-1 of Caenorhabditis elegans.